We begin with the raw amino-acid sequence, 640 residues long: 2-hydroxyacyl-CoA lyase 2 (640 aa).

A helical membrane pass occupies residues 2-22 (VLFLIIAAIIIGLLLWKWLDV). Thiamine diphosphate is bound at residue E102. The tract at residues 477 to 557 (DFVGSAAYIV…VIGIVGNDAC (81 aa)) is thiamine pyrophosphate binding. D528 and N554 together coordinate Mg(2+).

It belongs to the TPP enzyme family. Mg(2+) serves as cofactor. Requires thiamine diphosphate as cofactor.

It is found in the endoplasmic reticulum membrane. The enzyme catalyses 2-hydroxyoctadecanoyl-CoA = heptadecanal + formyl-CoA. It catalyses the reaction (2R)-hydroxyhexadecanoyl-CoA = pentadecanal + formyl-CoA. In terms of biological role, endoplasmic reticulum 2-OH acyl-CoA lyase involved in the cleavage (C1 removal) reaction in the fatty acid alpha-oxydation in a thiamine pyrophosphate (TPP)-dependent manner. The sequence is that of 2-hydroxyacyl-CoA lyase 2 from Caenorhabditis elegans.